The chain runs to 131 residues: Protein FAM107B (131 aa).

Ala-2 is subject to N-acetylalanine. The tract at residues 39–79 is disordered; that stretch reads MNQKRGLAPQNKPELQKVMEKRRRDQVIKQKEEEAQKKKSD. Lys-50 is modified (N6-acetyllysine). The span at 52 to 79 shows a compositional bias: basic and acidic residues; that stretch reads ELQKVMEKRRRDQVIKQKEEEAQKKKSD. Residues 61-112 adopt a coiled-coil conformation; the sequence is RRDQVIKQKEEEAQKKKSDLEIELLKRQQKLEQLELEKQKLQEEQENAPEFV.

It belongs to the FAM107 family. As to expression, expressed in the hippocampus and hypothalamus. Expressed in the pontine nuclei and reticulotegmental nucleus. Expressed in Purkinje cell and nuclear layers of the cerebelum. Expressed in the choroid plexus. Expressed in hippocampal granule neurons of the dente gyrus.

The chain is Protein FAM107B from Mus musculus (Mouse).